The primary structure comprises 251 residues: Hydroxyacylglutathione hydrolase (251 aa).

Residues histidine 53, histidine 55, aspartate 57, histidine 58, histidine 110, aspartate 127, and histidine 165 each contribute to the Zn(2+) site.

Belongs to the metallo-beta-lactamase superfamily. Glyoxalase II family. In terms of assembly, monomer. The cofactor is Zn(2+).

The enzyme catalyses an S-(2-hydroxyacyl)glutathione + H2O = a 2-hydroxy carboxylate + glutathione + H(+). Its pathway is secondary metabolite metabolism; methylglyoxal degradation; (R)-lactate from methylglyoxal: step 2/2. Its function is as follows. Thiolesterase that catalyzes the hydrolysis of S-D-lactoyl-glutathione to form glutathione and D-lactic acid. The sequence is that of Hydroxyacylglutathione hydrolase from Salmonella agona (strain SL483).